The sequence spans 229 residues: General odorant-binding protein 69 (229 aa).

The N-terminal stretch at 1–20 (MDRLLLVLLSSASLLLTVYG) is a signal peptide. Cysteines 66 and 106 form a disulfide.

It belongs to the PBP/GOBP family.

It localises to the secreted. Its function is as follows. Present in the aqueous fluid surrounding olfactory sensory dendrites and are thought to aid in the capture and transport of hydrophobic odorants into and through this fluid. The polypeptide is General odorant-binding protein 69 (Obp69) (Anopheles gambiae (African malaria mosquito)).